The primary structure comprises 140 residues: Large ribosomal subunit protein bL17 (140 aa).

It belongs to the bacterial ribosomal protein bL17 family. As to quaternary structure, part of the 50S ribosomal subunit. Contacts protein L32.

This is Large ribosomal subunit protein bL17 from Paramagnetospirillum magneticum (strain ATCC 700264 / AMB-1) (Magnetospirillum magneticum).